The primary structure comprises 114 residues: Vacuolar morphogenesis protein 10 (114 aa).

The protein resides in the vacuole membrane. Its function is as follows. Required for vacuolar fusion. Involved in the early steps of the fusion pathway. This chain is Vacuolar morphogenesis protein 10 (VAM10), found in Saccharomyces cerevisiae (strain ATCC 204508 / S288c) (Baker's yeast).